We begin with the raw amino-acid sequence, 414 residues long: MNRQSWLLNLSLLKTHPAFRAVFLARFISIVSLGLLGVAVPVQIQMMTHSTWQVGLSVTLTGGAMFIGLMVGGVLADRYERKKVILLARGTCGIGFIGLCVNALLPEPSLLAIYLLGLWDGFFASLGVTALLAATPALVGRENLMQAGAITMLTVRLGSVISPMLGGILLASGGVAWNYGLAAAGTFITLLPLLTLPRLPVPPQPRENPFLALLAAFRFLLACPLIGGIALLGGLVTMASAVRVLYPALAMSWQMSAAQIGLLYAAIPLGAAIGALTSGQLAHSVRPGLIMLVSTVGSFLAVGLFAIMPVWIAGVICLALFGWLSAISSLLQYTLLQTQTPENMLGRMNGLWTAQNVTGDAIGAALLGGLGAMMTPVASASVSGFGLVIIGLLLLLVLGELRRFRQTSPVSDAG.

Residues 1-21 (MNRQSWLLNLSLLKTHPAFRA) are Cytoplasmic-facing. Residues 22 to 42 (VFLARFISIVSLGLLGVAVPV) form a helical membrane-spanning segment. Residues 43 to 55 (QIQMMTHSTWQVG) are Periplasmic-facing. The helical transmembrane segment at 56–76 (LSVTLTGGAMFIGLMVGGVLA) threads the bilayer. At 77–83 (DRYERKK) the chain is on the cytoplasmic side. Residues 84 to 104 (VILLARGTCGIGFIGLCVNAL) form a helical membrane-spanning segment. Residues 105–109 (LPEPS) are Periplasmic-facing. The helical transmembrane segment at 110–130 (LLAIYLLGLWDGFFASLGVTA) threads the bilayer. At 131-156 (LLAATPALVGRENLMQAGAITMLTVR) the chain is on the cytoplasmic side. Residues 157–177 (LGSVISPMLGGILLASGGVAW) form a helical membrane-spanning segment. Residue asparagine 178 is a topological domain, periplasmic. The helical transmembrane segment at 179 to 199 (YGLAAAGTFITLLPLLTLPRL) threads the bilayer. The Cytoplasmic portion of the chain corresponds to 200 to 218 (PVPPQPRENPFLALLAAFR). Residues 219–239 (FLLACPLIGGIALLGGLVTMA) form a helical membrane-spanning segment. Topologically, residues 240 to 256 (SAVRVLYPALAMSWQMS) are periplasmic. A helical membrane pass occupies residues 257 to 277 (AAQIGLLYAAIPLGAAIGALT). The Cytoplasmic segment spans residues 278 to 287 (SGQLAHSVRP). The helical transmembrane segment at 288-307 (GLIMLVSTVGSFLAVGLFAI) threads the bilayer. Topologically, residues 308 to 313 (MPVWIA) are periplasmic. Residues 314 to 336 (GVICLALFGWLSAISSLLQYTLL) form a helical membrane-spanning segment. Residues 337–356 (QTQTPENMLGRMNGLWTAQN) lie on the Cytoplasmic side of the membrane. The chain crosses the membrane as a helical span at residues 357–377 (VTGDAIGAALLGGLGAMMTPV). A topological domain (periplasmic) is located at residue alanine 378. The helical transmembrane segment at 379–399 (SASVSGFGLVIIGLLLLLVLG) threads the bilayer. The Cytoplasmic portion of the chain corresponds to 400–414 (ELRRFRQTSPVSDAG).

It belongs to the major facilitator superfamily. EntS (TC 2.A.1.38) family.

It localises to the cell inner membrane. Its function is as follows. Component of an export pathway for enterobactin. This chain is Enterobactin exporter EntS, found in Salmonella paratyphi A (strain ATCC 9150 / SARB42).